Reading from the N-terminus, the 393-residue chain is Protein TsgA (393 aa).

12 consecutive transmembrane segments (helical) span residues 11–31, 51–71, 78–98, 101–121, 134–154, 162–182, 206–226, 245–265, 273–293, 297–317, 332–352, and 361–381; these read WISF…GMVM, FLNA…EIVP, FGFL…SLAL, AAMF…TFLI, LLFT…IAAF, WYWV…LTFG, IGVL…LGFI, TLVS…SFIL, ILTV…TGTP, AWSI…IITL, FVLT…GPIV, and LLTA…LGFV.

It belongs to the major facilitator superfamily. TsgA family.

It is found in the cell inner membrane. The polypeptide is Protein TsgA (Shigella dysenteriae serotype 1 (strain Sd197)).